Reading from the N-terminus, the 570-residue chain is Peptidyl-prolyl cis-trans isomerase-like 2 (570 aa).

Residues 37–110 form the U-box domain; that stretch reads KRLPFNFCSL…GDYVDPVTYK (74 aa). Disordered stretches follow at residues 215 to 253, 428 to 449, and 469 to 570; these read RSER…KPTP, STTL…PTPD, and KKAE…SSWD. Over residues 234–248 the composition is skewed to low complexity; the sequence is STTTSTQSKTASFQS. A PPIase cyclophilin-type domain is found at 298–457; it reads QKGYARISTT…PDIRITDVTI (160 aa). The span at 428–446 shows a compositional bias: polar residues; sequence STTLNNLETHPVNSSTNRP. Over residues 469–483 the composition is skewed to basic and acidic residues; that stretch reads KKAEEASGKNKKVDP. Acidic residues-rich tracts occupy residues 484 to 497 and 535 to 550; these read TEED…DDDQ and QEED…EPEP.

It belongs to the cyclophilin-type PPIase family. PPIL2 subfamily.

The protein resides in the nucleus. The enzyme catalyses [protein]-peptidylproline (omega=180) = [protein]-peptidylproline (omega=0). The catalysed reaction is S-ubiquitinyl-[E2 ubiquitin-conjugating enzyme]-L-cysteine + [acceptor protein]-L-lysine = [E2 ubiquitin-conjugating enzyme]-L-cysteine + N(6)-ubiquitinyl-[acceptor protein]-L-lysine.. Its function is as follows. May catalyze the cis-trans isomerization of proline imidic peptide bonds in oligopeptides thereby assisting the folding of proteins. May also function as a chaperone, playing a role in intracellular transport of proteins. May also have a protein ubiquitin ligase activity acting as an E3 ubiquitin protein ligase or as a ubiquitin-ubiquitin ligase promoting elongation of ubiquitin chains on proteins. This is Peptidyl-prolyl cis-trans isomerase-like 2 (cyp8) from Aspergillus oryzae (strain ATCC 42149 / RIB 40) (Yellow koji mold).